The chain runs to 93 residues: Guanine nucleotide-binding protein subunit gamma (93 aa).

Residues 1–22 (MPQYASRDVGDPSQIKKNKQSM) form a disordered region. Cys-89 is lipidated: S-palmitoyl cysteine. A Cysteine methyl ester modification is found at Cys-90. The S-farnesyl cysteine moiety is linked to residue Cys-90. The propeptide at 91 to 93 (VVM) is removed in mature form.

The protein belongs to the G protein gamma family. G proteins are composed of 3 units, alpha, beta and gamma.

The protein localises to the membrane. The chain is Guanine nucleotide-binding protein subunit gamma (gng-1) from Neurospora crassa (strain ATCC 24698 / 74-OR23-1A / CBS 708.71 / DSM 1257 / FGSC 987).